Here is a 283-residue protein sequence, read N- to C-terminus: Myeloid differentiation primary response protein MyD88-B (283 aa).

The region spanning 27–105 is the Death domain; that stretch reads RLCLYLNPNA…DILTDLAPLI (79 aa). The segment at 106 to 143 is intermediate domain; it reads EADCKKYLEKKHGPLPLQDDNVDSSEQYRITKSDDPYG. A TIR domain is found at 147 to 281; the sequence is ETFDAFICCC…WFWDKLAKAL (135 aa).

It localises to the cytoplasm. Functionally, adapter protein involved in the Toll-like receptor and IL-1 receptor signaling pathway in the innate immune response. Activates expression of target genes in the Spemann organizer region during early embryonic development. Is required for normal axis formation. The protein is Myeloid differentiation primary response protein MyD88-B (myd88-b) of Xenopus laevis (African clawed frog).